Consider the following 72-residue polypeptide: uncharacterized protein (72 aa).

The N-terminal stretch at methionine 1 to alanine 22 is a signal peptide. Residues serine 23–methionine 28 are Extracellular-facing. A helical membrane pass occupies residues threonine 29 to phenylalanine 49. At serine 50 to cysteine 72 the chain is on the cytoplasmic side.

Its subcellular location is the membrane. This is an uncharacterized protein from Dictyostelium discoideum (Social amoeba).